The sequence spans 186 residues: Large ribosomal subunit protein bL9 (186 aa).

Over residues 151–167 (PEEAEKQARGEAIMREE) the composition is skewed to basic and acidic residues. Residues 151 to 186 (PEEAEKQARGEAIMREESEYELETGEEVAEGPEQTA) form a disordered region. Residues 168 to 180 (SEYELETGEEVAE) are compositionally biased toward acidic residues.

Belongs to the bacterial ribosomal protein bL9 family.

Functionally, binds to the 23S rRNA. This chain is Large ribosomal subunit protein bL9, found in Acidiphilium cryptum (strain JF-5).